The sequence spans 188 residues: Adenine phosphoribosyltransferase (188 aa).

The protein belongs to the purine/pyrimidine phosphoribosyltransferase family. In terms of assembly, homodimer.

Its subcellular location is the cytoplasm. It carries out the reaction AMP + diphosphate = 5-phospho-alpha-D-ribose 1-diphosphate + adenine. The protein operates within purine metabolism; AMP biosynthesis via salvage pathway; AMP from adenine: step 1/1. In terms of biological role, catalyzes a salvage reaction resulting in the formation of AMP, that is energically less costly than de novo synthesis. This is Adenine phosphoribosyltransferase from Burkholderia multivorans (strain ATCC 17616 / 249).